The following is a 294-amino-acid chain: 33 kDa chaperonin (294 aa).

2 disulfides stabilise this stretch: Cys-238–Cys-240 and Cys-271–Cys-274.

It belongs to the HSP33 family. Under oxidizing conditions two disulfide bonds are formed involving the reactive cysteines. Under reducing conditions zinc is bound to the reactive cysteines and the protein is inactive.

The protein resides in the cytoplasm. Its function is as follows. Redox regulated molecular chaperone. Protects both thermally unfolding and oxidatively damaged proteins from irreversible aggregation. Plays an important role in the bacterial defense system toward oxidative stress. In Clostridium tetani (strain Massachusetts / E88), this protein is 33 kDa chaperonin.